We begin with the raw amino-acid sequence, 301 residues long: Acetylglutamate kinase (301 aa).

Substrate is bound by residues G68–G69, R90, and N195.

This sequence belongs to the acetylglutamate kinase family. ArgB subfamily.

The protein resides in the cytoplasm. The catalysed reaction is N-acetyl-L-glutamate + ATP = N-acetyl-L-glutamyl 5-phosphate + ADP. The protein operates within amino-acid biosynthesis; L-arginine biosynthesis; N(2)-acetyl-L-ornithine from L-glutamate: step 2/4. Its function is as follows. Catalyzes the ATP-dependent phosphorylation of N-acetyl-L-glutamate. This is Acetylglutamate kinase from Pseudomonas entomophila (strain L48).